The primary structure comprises 444 residues: Alpha-N-acetylgalactosaminidase (444 aa).

NAD(+) is bound by residues Leu30–Arg31, Asp52, Asn80, Trp101–His104, His107, Glu121–Val122, and Asn150. Residue Tyr179 participates in substrate binding. Ser208–Trp212 lines the NAD(+) pocket. Substrate contacts are provided by residues Arg213, Tyr225–His228, and Tyr307. An NAD(+)-binding site is contributed by Tyr225.

It belongs to the Gfo/Idh/MocA family. Glycosyl hydrolase 109 subfamily. It depends on NAD(+) as a cofactor.

It carries out the reaction Cleavage of non-reducing alpha-(1-&gt;3)-N-acetylgalactosamine residues from human blood group A and AB mucin glycoproteins, Forssman hapten and blood group A lacto series glycolipids.. Its function is as follows. Glycosidase that has specific alpha-N-acetylgalactosaminidase activity. The chain is Alpha-N-acetylgalactosaminidase (nagA) from Elizabethkingia meningoseptica (Chryseobacterium meningosepticum).